A 189-amino-acid polypeptide reads, in one-letter code: Elongation factor P (189 aa).

An N6-(3,6-diaminohexanoyl)-5-hydroxylysine modification is found at lysine 34.

It belongs to the elongation factor P family. Post-translationally, may be beta-lysylated on the epsilon-amino group of Lys-34 by the combined action of EpmA and EpmB, and then hydroxylated on the C5 position of the same residue by EpmC (if this protein is present). Lysylation is critical for the stimulatory effect of EF-P on peptide-bond formation. The lysylation moiety may extend toward the peptidyltransferase center and stabilize the terminal 3-CCA end of the tRNA. Hydroxylation of the C5 position on Lys-34 may allow additional potential stabilizing hydrogen-bond interactions with the P-tRNA.

It localises to the cytoplasm. Its pathway is protein biosynthesis; polypeptide chain elongation. In terms of biological role, involved in peptide bond synthesis. Alleviates ribosome stalling that occurs when 3 or more consecutive Pro residues or the sequence PPG is present in a protein, possibly by augmenting the peptidyl transferase activity of the ribosome. Modification of Lys-34 is required for alleviation. The polypeptide is Elongation factor P (Alcanivorax borkumensis (strain ATCC 700651 / DSM 11573 / NCIMB 13689 / SK2)).